The following is a 220-amino-acid chain: MLSVILKSSVRGLGKAGEIAKVRPGYARYLLADGKAVRATKDNVALLEQKLALIEEENSKKLAEAEGVAKSLGAERLIIVRQSSDDGKLFGSVTVRDVSKLLCDLGYDIQPRCVSFSEVIKRTGEYEINVELHADLVATLRLHVVRNESEAERVRLGIAKSEDQAAAAAEVEQAEDVAAAEQQDSSPVDDHADDADGVADGEGRDEGAGDASDEEEMPST.

Over residues 167–184 (AAAEVEQAEDVAAAEQQD) the composition is skewed to low complexity. The tract at residues 167 to 220 (AAAEVEQAEDVAAAEQQDSSPVDDHADDADGVADGEGRDEGAGDASDEEEMPST) is disordered. Residues 211 to 220 (ASDEEEMPST) are compositionally biased toward acidic residues.

Belongs to the bacterial ribosomal protein bL9 family.

Functionally, binds to the 23S rRNA. The chain is Large ribosomal subunit protein bL9 from Anaplasma marginale (strain Florida).